Consider the following 63-residue polypeptide: Kurtoxin-like II (63 aa).

The 61-residue stretch at 2–62 (IDGYPVDYWN…ARIKRSGRCR (61 aa)) folds into the LCN-type CS-alpha/beta domain. Cystine bridges form between Cys12-Cys61, Cys16-Cys37, Cys23-Cys44, and Cys27-Cys46.

It belongs to the long (4 C-C) scorpion toxin superfamily. Sodium channel inhibitor family. Alpha subfamily. Expressed by the venom gland.

Its subcellular location is the secreted. Its function is as follows. This neurotoxin acts on sodium and calcium channels. Potently inhibits native voltage-gated T-type calcium channel activity in mouse male germ cells. Also binds Cav3.1/CACNA1G, Cav3.2/CACNA1H, and Cav3.3/CACNA1I T-type calcium channels and inhibits the channels by modifying voltage-dependent gating. In addition, binds and significantly inhibits the inactivation of activated sodium channels (Nav1.2/SCN2A and Nav1.5/SCN5A). The chain is Kurtoxin-like II from Parabuthus granulatus (Granulated thick-tailed scorpion).